Consider the following 436-residue polypeptide: Trigger factor (436 aa).

One can recognise a PPIase FKBP-type domain in the interval 161–246 (GDQVNIDFVG…VNSVAAPQLP (86 aa)).

Belongs to the FKBP-type PPIase family. Tig subfamily.

The protein localises to the cytoplasm. The catalysed reaction is [protein]-peptidylproline (omega=180) = [protein]-peptidylproline (omega=0). Functionally, involved in protein export. Acts as a chaperone by maintaining the newly synthesized protein in an open conformation. Functions as a peptidyl-prolyl cis-trans isomerase. This chain is Trigger factor, found in Stutzerimonas stutzeri (strain A1501) (Pseudomonas stutzeri).